A 345-amino-acid polypeptide reads, in one-letter code: Uroporphyrinogen decarboxylase (345 aa).

Substrate-binding positions include 27–31, Phe46, Asp76, Tyr152, Ser207, and His320; that span reads RQAGR.

This sequence belongs to the uroporphyrinogen decarboxylase family. As to quaternary structure, homodimer.

The protein resides in the cytoplasm. The enzyme catalyses uroporphyrinogen III + 4 H(+) = coproporphyrinogen III + 4 CO2. It functions in the pathway porphyrin-containing compound metabolism; protoporphyrin-IX biosynthesis; coproporphyrinogen-III from 5-aminolevulinate: step 4/4. Functionally, catalyzes the decarboxylation of four acetate groups of uroporphyrinogen-III to yield coproporphyrinogen-III. This chain is Uroporphyrinogen decarboxylase, found in Oceanobacillus iheyensis (strain DSM 14371 / CIP 107618 / JCM 11309 / KCTC 3954 / HTE831).